Here is a 76-residue protein sequence, read N- to C-terminus: UPF0154 protein Sca_0984 (76 aa).

The chain crosses the membrane as a helical span at residues 4–24 (WLAILLIVAALIIGLVGGFFL).

This sequence belongs to the UPF0154 family.

It is found in the cell membrane. In Staphylococcus carnosus (strain TM300), this protein is UPF0154 protein Sca_0984.